Consider the following 596-residue polypeptide: Deuterosome assembly protein 1 (596 aa).

3 coiled-coil regions span residues 8 to 68 (IARN…NHEI), 130 to 180 (CELQ…FQKE), and 227 to 284 (IENL…DLLR). A compositionally biased stretch (polar residues) spans 297–306 (TANLANQKTA). The interval 297–316 (TANLANQKTAQGEEASFQVT) is disordered. Positions 337 to 402 (SEKYQAENDL…LKGAQNRQTS (66 aa)) form a coiled coil. Positions 447-467 (DKPQKHRSFHGENNSLKPTNY) are disordered. Positions 457 to 467 (GENNSLKPTNY) are enriched in polar residues.

The protein belongs to the CEP63 family.

It localises to the cytoplasm. In terms of biological role, key structural component of the deuterosome, a structure that promotes de novo centriole amplification in multiciliated cells. Deuterosome-mediated centriole amplification occurs in terminally differentiated multiciliated cells and can generate more than 100 centrioles. Probably sufficient for the specification and formation of the deuterosome inner core. This chain is Deuterosome assembly protein 1, found in Xenopus tropicalis (Western clawed frog).